Reading from the N-terminus, the 138-residue chain is Integration host factor subunit beta (138 aa).

A compositionally biased stretch (basic and acidic residues) spans lysine 81–glycine 98. The segment at lysine 81–arginine 138 is disordered.

Belongs to the bacterial histone-like protein family. Heterodimer of an alpha and a beta chain.

This protein is one of the two subunits of integration host factor, a specific DNA-binding protein that functions in genetic recombination as well as in transcriptional and translational control. The sequence is that of Integration host factor subunit beta from Ralstonia nicotianae (strain ATCC BAA-1114 / GMI1000) (Ralstonia solanacearum).